We begin with the raw amino-acid sequence, 269 residues long: Formamidopyrimidine-DNA glycosylase (269 aa).

The active-site Schiff-base intermediate with DNA is the Pro2. Glu3 functions as the Proton donor in the catalytic mechanism. Catalysis depends on Lys57, which acts as the Proton donor; for beta-elimination activity. The DNA site is built by His90, Arg109, and Lys150. The segment at Gln235–Lys269 adopts an FPG-type zinc-finger fold. The Proton donor; for delta-elimination activity role is filled by Arg259.

This sequence belongs to the FPG family. As to quaternary structure, monomer. Requires Zn(2+) as cofactor.

It catalyses the reaction Hydrolysis of DNA containing ring-opened 7-methylguanine residues, releasing 2,6-diamino-4-hydroxy-5-(N-methyl)formamidopyrimidine.. It carries out the reaction 2'-deoxyribonucleotide-(2'-deoxyribose 5'-phosphate)-2'-deoxyribonucleotide-DNA = a 3'-end 2'-deoxyribonucleotide-(2,3-dehydro-2,3-deoxyribose 5'-phosphate)-DNA + a 5'-end 5'-phospho-2'-deoxyribonucleoside-DNA + H(+). Its function is as follows. Involved in base excision repair of DNA damaged by oxidation or by mutagenic agents. Acts as a DNA glycosylase that recognizes and removes damaged bases. Has a preference for oxidized purines, such as 7,8-dihydro-8-oxoguanine (8-oxoG). Has AP (apurinic/apyrimidinic) lyase activity and introduces nicks in the DNA strand. Cleaves the DNA backbone by beta-delta elimination to generate a single-strand break at the site of the removed base with both 3'- and 5'-phosphates. The chain is Formamidopyrimidine-DNA glycosylase from Salmonella heidelberg (strain SL476).